The primary structure comprises 854 residues: DNA mismatch repair protein MutS (854 aa).

Residue 615 to 622 coordinates ATP; sequence GPNMGGKS.

It belongs to the DNA mismatch repair MutS family.

Its function is as follows. This protein is involved in the repair of mismatches in DNA. It is possible that it carries out the mismatch recognition step. This protein has a weak ATPase activity. This is DNA mismatch repair protein MutS from Aliivibrio fischeri (strain MJ11) (Vibrio fischeri).